The primary structure comprises 415 residues: Fructose-like permease IIC component (415 aa).

The Cytoplasmic segment spans residues 1 to 46 (MAIKKRSATVVPGASGAAAAVKNPQASKSSFWGELPQHVMSGISRM). The PTS EIIC type-2 domain maps to 35–410 (LPQHVMSGIS…RLMMFRKGKL (376 aa)). A helical membrane pass occupies residues 47–67 (VPTLIMGGVILAFSQLIAYSW). The Periplasmic portion of the chain corresponds to 68–101 (LKIPAEIGIMDALNSGKFSGFDLSLLKFAWLSQS). The chain crosses the membrane as a helical span at residues 102 to 122 (FGGVLFGFAIPMFAAFVANSI). Residues 123–126 (GGKL) are Cytoplasmic-facing. The chain crosses the membrane as a helical span at residues 127 to 147 (AFPAGFIGGLMSTQPTQLLNF). The Periplasmic portion of the chain corresponds to 148-157 (DPSTMQWATS). Residues 158–178 (SPVPSTFIGALIISIVAGYLV) form a helical membrane-spanning segment. Residues 179 to 197 (KWMNQKIQLPDFLLAFKTT) are Cytoplasmic-facing. The helical transmembrane segment at 198–218 (FLLPILSAIFVMLAMYYVITP) threads the bilayer. The Periplasmic portion of the chain corresponds to 219-237 (FGGWINGGIRTVLTAAGEK). Residues 238–258 (GALMYAMGIAAATAIDLGGPI) traverse the membrane as a helical segment. Over 259–276 (NKAAGFVAFSFTTDHVLP) the chain is Cytoplasmic. The chain crosses the membrane as a helical span at residues 277-297 (VTARSIAIVIPPIGLGLATII). Topologically, residues 298 to 318 (DRRLTGKRLFNAQLYPQGKTA) are periplasmic. A helical transmembrane segment spans residues 319–339 (MFLAFMGISEGAIPFALESPI). Residues 340-341 (TA) lie on the Cytoplasmic side of the membrane. The helical transmembrane segment at 342 to 362 (IPSYMVGAIVGSTAAVWLGAV) threads the bilayer. The Periplasmic portion of the chain corresponds to 363–378 (QWFPESAIWAWPLVTN). Residues 379 to 399 (LGVYMAGIALGAVITALMVVF) traverse the membrane as a helical segment. Residues 400 to 415 (LRLMMFRKGKLLIDSL) lie on the Cytoplasmic side of the membrane.

It is found in the cell inner membrane. Its function is as follows. The phosphoenolpyruvate-dependent sugar phosphotransferase system (PTS), a major carbohydrate active -transport system, catalyzes the phosphorylation of incoming sugar substrates concomitant with their translocation across the cell membrane. The polypeptide is Fructose-like permease IIC component (fryC) (Escherichia coli O157:H7).